A 117-amino-acid polypeptide reads, in one-letter code: UPF0344 protein GWCH70_0687 (117 aa).

Helical transmembrane passes span 2–22 (THAH…AVSL), 32–52 (IVQM…GLLL), 55–75 (IASI…LIGA), and 97–117 (IVAF…FDLF).

The protein belongs to the UPF0344 family.

It is found in the cell membrane. The sequence is that of UPF0344 protein GWCH70_0687 from Geobacillus sp. (strain WCH70).